The sequence spans 754 residues: 5-methyltetrahydropteroyltriglutamate--homocysteine methyltransferase (754 aa).

5-methyltetrahydropteroyltri-L-glutamate contacts are provided by residues 17-20 (RELK) and K117. L-homocysteine is bound by residues 431 to 433 (IGS) and E484. Residues 431-433 (IGS) and E484 contribute to the L-methionine site. Residues 515 to 516 (RC) and W561 contribute to the 5-methyltetrahydropteroyltri-L-glutamate site. D599 is a binding site for L-homocysteine. D599 is an L-methionine binding site. Residue E605 coordinates 5-methyltetrahydropteroyltri-L-glutamate. Residues H641, C643, and E665 each contribute to the Zn(2+) site. H694 acts as the Proton donor in catalysis. Zn(2+) is bound at residue C726.

This sequence belongs to the vitamin-B12 independent methionine synthase family. Zn(2+) serves as cofactor.

It carries out the reaction 5-methyltetrahydropteroyltri-L-glutamate + L-homocysteine = tetrahydropteroyltri-L-glutamate + L-methionine. It functions in the pathway amino-acid biosynthesis; L-methionine biosynthesis via de novo pathway; L-methionine from L-homocysteine (MetE route): step 1/1. Its function is as follows. Catalyzes the transfer of a methyl group from 5-methyltetrahydrofolate to homocysteine resulting in methionine formation. The protein is 5-methyltetrahydropteroyltriglutamate--homocysteine methyltransferase of Salmonella agona (strain SL483).